The primary structure comprises 357 residues: Protein MGF 360-14L (357 aa).

This sequence belongs to the asfivirus MGF 360 family. Interacts with host IRF3 and TRIM21; these interactions mediates degradation of IRF3 through TRIM21 and ubiquitin-meditated proteolysis.

Its subcellular location is the host cytoplasm. Plays a role in virus cell tropism, and may be required for efficient virus replication in macrophages. Also inhibits the host cGAS/STING-mediated type I interferon production by inducing host IRF3 degradation through the proteasome pathway. The polypeptide is Protein MGF 360-14L (Ornithodoros (relapsing fever ticks)).